We begin with the raw amino-acid sequence, 99 residues long: Co-chaperonin GroES (99 aa).

It belongs to the GroES chaperonin family. In terms of assembly, heptamer of 7 subunits arranged in a ring. Interacts with the chaperonin GroEL.

Its subcellular location is the cytoplasm. In terms of biological role, together with the chaperonin GroEL, plays an essential role in assisting protein folding. The GroEL-GroES system forms a nano-cage that allows encapsulation of the non-native substrate proteins and provides a physical environment optimized to promote and accelerate protein folding. GroES binds to the apical surface of the GroEL ring, thereby capping the opening of the GroEL channel. In Corynebacterium glutamicum (strain R), this protein is Co-chaperonin GroES.